The chain runs to 375 residues: Trichodiene synthase (375 aa).

Belongs to the trichodiene synthase family.

It carries out the reaction (2E,6E)-farnesyl diphosphate = trichodiene + diphosphate. It participates in sesquiterpene biosynthesis; trichothecene biosynthesis. Functionally, TS is a member of the terpene cyclase group of enzymes. It catalyzes the isomerization and cyclization of farnesyl pyro-phosphate to form trichodiene, the first cyclic intermediate in the biosynthetic pathway for trichothecenes. It serves to branch trichothecene biosynthesis from the isoprenoid pathway. This is Trichodiene synthase (TRI5) from Gibberella zeae (strain ATCC MYA-4620 / CBS 123657 / FGSC 9075 / NRRL 31084 / PH-1) (Wheat head blight fungus).